Consider the following 1001-residue polypeptide: Ribonuclease E/G-like protein, chloroplastic (1001 aa).

The N-terminal 48 residues, 1-48, are a transit peptide targeting the chloroplast; sequence MDVTEVPWRRLPQFSVSSRASWLVSSGFPLSSYMFSHVERGKTFRLTL. In terms of domain architecture, CBM20 spans 76 to 185; sequence SRLKGLCEVV…KIIIRDSWMS (110 aa). Asp-755 is a binding site for Mg(2+). Residues 769–789 adopt a coiled-coil conformation; the sequence is QEKAILEVNLAAARQIAREIR. Mg(2+) is bound at residue Asp-800. Positions 858 and 861 each coordinate Zn(2+).

This sequence belongs to the RNase E/G family. In terms of assembly, part of a chloroplastic degradosome-like complex. Interacts with RHON1. A homotetramer formed by a dimer of dimers. The cofactor is Mg(2+). Requires Zn(2+) as cofactor. In terms of tissue distribution, expressed in cotyledons, rosette and cauline leaves.

It is found in the plastid. Its subcellular location is the chloroplast stroma. Involved in intercistronic processing of primary transcripts from chloroplast operons. The endonucleolytic activity of the enzyme depends on the number of phosphates at the 5' end, is inhibited by structured RNA, and preferentially cleaves A/U-rich sequences. This chain is Ribonuclease E/G-like protein, chloroplastic (RNE), found in Arabidopsis thaliana (Mouse-ear cress).